A 194-amino-acid polypeptide reads, in one-letter code: GTP cyclohydrolase 1 (194 aa).

C83, H86, and C155 together coordinate Zn(2+).

It belongs to the GTP cyclohydrolase I family. As to quaternary structure, toroid-shaped homodecamer, composed of two pentamers of five dimers.

The enzyme catalyses GTP + H2O = 7,8-dihydroneopterin 3'-triphosphate + formate + H(+). It participates in cofactor biosynthesis; 7,8-dihydroneopterin triphosphate biosynthesis; 7,8-dihydroneopterin triphosphate from GTP: step 1/1. The chain is GTP cyclohydrolase 1 (folE) from Streptococcus pyogenes serotype M1.